Reading from the N-terminus, the 110-residue chain is MSIQNLNTRDPFADAIKGNDDDIQDGLVHIRIQQRNGRKTLTTVQGLSAEYDLKKIVRSCKKEFACNGTVIEHPEYGEVLQLQGDQRENICQWLTKVGLAKPDQLKVHGF.

T40 is subject to Phosphothreonine.

This sequence belongs to the SUI1 family.

Functionally, probably involved in translation. This is Eukaryotic translation initiation factor eIF1 from Drosophila melanogaster (Fruit fly).